We begin with the raw amino-acid sequence, 108 residues long: Nucleoid-associated protein GWCH70_0020 (108 aa).

The tract at residues 1–34 (MMRGGMGNMQKMMKQMQKMQKEMQKAQEQLAEKT) is disordered. A compositionally biased stretch (low complexity) spans 9-18 (MQKMMKQMQK). Basic and acidic residues predominate over residues 19–34 (MQKEMQKAQEQLAEKT).

The protein belongs to the YbaB/EbfC family. Homodimer.

It localises to the cytoplasm. The protein localises to the nucleoid. Binds to DNA and alters its conformation. May be involved in regulation of gene expression, nucleoid organization and DNA protection. The protein is Nucleoid-associated protein GWCH70_0020 of Geobacillus sp. (strain WCH70).